We begin with the raw amino-acid sequence, 134 residues long: Profilin (134 aa).

The protein belongs to the profilin family. In terms of assembly, occurs in many kinds of cells as a complex with monomeric actin in a 1:1 ratio.

Its subcellular location is the cytoplasm. The protein localises to the cytoskeleton. Its function is as follows. Binds to actin and affects the structure of the cytoskeleton. At high concentrations, profilin prevents the polymerization of actin, whereas it enhances it at low concentrations. By binding to PIP2, it inhibits the formation of IP3 and DG. This chain is Profilin, found in Apium graveolens (Celery).